A 259-amino-acid chain; its full sequence is Synaptophysin-like protein 1 (259 aa).

At 1-33 the chain is on the cytoplasmic side; that stretch reads MAPNIYLVRQRISRLGQRMSGFQINLNPLKEPL. An MARVEL domain is found at 28–237; it reads PLKEPLGFIK…NAWFVYKETS (210 aa). A helical membrane pass occupies residues 34–54; sequence GFIKVLEWIASIFAFATCGGF. At 55 to 116 the chain is on the vesicular side; it reads KGQTEIQVNC…LIGDYSSSAQ (62 aa). A glycan (N-linked (GlcNAc...) asparagine) is linked at asparagine 71. Residues 117 to 137 traverse the membrane as a helical segment; the sequence is FYVTFAVFVFLYCIAALLLYV. Topologically, residues 138–150 are cytoplasmic; that stretch reads GYTSLYLDSRKLP. The chain crosses the membrane as a helical span at residues 151–171; it reads MIDFVVTLVATFLWLVSTSAW. Topologically, residues 172-212 are vesicular; the sequence is AKALTDIKIATGHNIIDELPPCKKKAVLCYFGSVTSMGSLN. An N-linked (GlcNAc...) asparagine glycan is attached at asparagine 212. Residues 213–233 traverse the membrane as a helical segment; it reads VSVIFGFLNMILWGGNAWFVY. Residues 234-259 are Cytoplasmic-facing; the sequence is KETSLHSPSNTSAPHSQGGIPPPTGI.

This sequence belongs to the synaptophysin/synaptobrevin family.

The protein localises to the cytoplasmic vesicle membrane. Its subcellular location is the melanosome. This chain is Synaptophysin-like protein 1 (SYPL1), found in Homo sapiens (Human).